A 485-amino-acid chain; its full sequence is Glutamyl-tRNA(Gln) amidotransferase subunit A (485 aa).

Active-site charge relay system residues include K75 and S150. S174 serves as the catalytic Acyl-ester intermediate.

The protein belongs to the amidase family. GatA subfamily. As to quaternary structure, heterotrimer of A, B and C subunits.

It catalyses the reaction L-glutamyl-tRNA(Gln) + L-glutamine + ATP + H2O = L-glutaminyl-tRNA(Gln) + L-glutamate + ADP + phosphate + H(+). Its function is as follows. Allows the formation of correctly charged Gln-tRNA(Gln) through the transamidation of misacylated Glu-tRNA(Gln) in organisms which lack glutaminyl-tRNA synthetase. The reaction takes place in the presence of glutamine and ATP through an activated gamma-phospho-Glu-tRNA(Gln). The protein is Glutamyl-tRNA(Gln) amidotransferase subunit A of Trichodesmium erythraeum (strain IMS101).